The chain runs to 122 residues: Nuclear transport factor 2A (122 aa).

M1 carries the post-translational modification N-acetylmethionine. One can recognise an NTF2 domain in the interval 6–119 (VAKAFVEHYY…YYVFNDIFRL (114 aa)).

Interacts with RAN1. In terms of tissue distribution, expressed in roots, stems, leaves and flowers, and, at low levels, in siliques.

It localises to the cytoplasm. It is found in the nucleus. The protein localises to the nucleus envelope. In terms of biological role, facilitates protein transport into the nucleus. Interacts with various nucleoporins and with Ran-GDP. Could be part of a multicomponent system of cytosolic factors that assemble at the pore complex during nuclear import. The sequence is that of Nuclear transport factor 2A from Arabidopsis thaliana (Mouse-ear cress).